Here is a 324-residue protein sequence, read N- to C-terminus: Beta-ketoacyl-[acyl-carrier-protein] synthase III (324 aa).

Active-site residues include Cys-112 and His-249. Residues 250–254 (QANRR) are ACP-binding. Asn-279 is an active-site residue.

Belongs to the thiolase-like superfamily. FabH family. In terms of assembly, homodimer.

Its subcellular location is the cytoplasm. It catalyses the reaction malonyl-[ACP] + acetyl-CoA + H(+) = 3-oxobutanoyl-[ACP] + CO2 + CoA. It functions in the pathway lipid metabolism; fatty acid biosynthesis. Functionally, catalyzes the condensation reaction of fatty acid synthesis by the addition to an acyl acceptor of two carbons from malonyl-ACP. Catalyzes the first condensation reaction which initiates fatty acid synthesis and may therefore play a role in governing the total rate of fatty acid production. Possesses both acetoacetyl-ACP synthase and acetyl transacylase activities. Its substrate specificity determines the biosynthesis of branched-chain and/or straight-chain of fatty acids. In Streptococcus pyogenes serotype M2 (strain MGAS10270), this protein is Beta-ketoacyl-[acyl-carrier-protein] synthase III.